A 203-amino-acid chain; its full sequence is Somatotropin (203 aa).

The N-terminal stretch at 1 to 17 is a signal peptide; sequence MDRVVIVLSVLSVAASS. Gln18 carries the post-translational modification Pyrrolidone carboxylic acid. His35 serves as a coordination point for Zn(2+). A disulfide bridge links Cys68 with Cys176. Glu185 serves as a coordination point for Zn(2+). The cysteines at positions 193 and 201 are disulfide-linked.

The protein belongs to the somatotropin/prolactin family.

The protein resides in the secreted. In terms of biological role, growth hormone plays an important role in growth control and is involved in the regulation of several anabolic processes. Implicated as an osmoregulatory substance important for seawater adaptation. The polypeptide is Somatotropin (gh) (Solea senegalensis (Senegalese sole)).